Here is a 117-residue protein sequence, read N- to C-terminus: Large ribosomal subunit protein bL17 (117 aa).

The protein belongs to the bacterial ribosomal protein bL17 family. As to quaternary structure, part of the 50S ribosomal subunit. Contacts protein L32.

The polypeptide is Large ribosomal subunit protein bL17 (Thermomicrobium roseum (strain ATCC 27502 / DSM 5159 / P-2)).